A 141-amino-acid chain; its full sequence is Large ribosomal subunit protein uL11c (141 aa).

Belongs to the universal ribosomal protein uL11 family. Part of the ribosomal stalk of the 50S ribosomal subunit. Interacts with L10 and the large rRNA to form the base of the stalk. L10 forms an elongated spine to which L12 dimers bind in a sequential fashion forming a multimeric L10(L12)X complex.

The protein localises to the plastid. Its subcellular location is the cyanelle. Its function is as follows. Forms part of the ribosomal stalk which helps the ribosome interact with GTP-bound translation factors. In Cyanophora paradoxa, this protein is Large ribosomal subunit protein uL11c.